The chain runs to 503 residues: 2-phosphoxylose phosphatase 1 (503 aa).

Residues 1-6 (MLARSR) are Cytoplasmic-facing. A helical; Signal-anchor for type II membrane protein membrane pass occupies residues 7-27 (FILVLVVGALLAVLSFSLQYL). The Lumenal segment spans residues 28–503 (HLIPTNPVAE…YQQACHQTVL (476 aa)). Positions 38 to 63 (QRSAGRSRKRVNPVLHTDPPAPDPIR) are disordered. Asn73 carries N-linked (GlcNAc...) asparagine glycosylation. His98 (nucleophile) is an active-site residue. Residue Asn365 is glycosylated (N-linked (GlcNAc...) asparagine). Asp396 serves as the catalytic Proton donor. The N-linked (GlcNAc...) asparagine glycan is linked to Asn490.

This sequence belongs to the histidine acid phosphatase family.

It is found in the golgi apparatus membrane. The catalysed reaction is 3-O-[beta-D-GlcA-(1-&gt;3)-beta-D-Gal-(1-&gt;3)-beta-D-Gal-(1-&gt;4)-beta-D-2-O-P-Xyl]-L-seryl-[protein] + H2O = 3-O-(beta-D-GlcA-(1-&gt;3)-beta-D-Gal-(1-&gt;3)-beta-D-Gal-(1-&gt;4)-beta-D-Xyl)-L-seryl-[protein] + phosphate. Its function is as follows. Responsible for the 2-O-dephosphorylation of xylose in the glycosaminoglycan-protein linkage region of proteoglycans thereby regulating the amount of mature glycosaminoglycan (GAG) chains. Sulfated glycosaminoglycans (GAGs), including heparan sulfate and chondroitin sulfate, are synthesized on the so-called common GAG-protein linkage region (GlcUAbeta1-3Galbeta1-3Galbeta1-4Xylbeta1-O-Ser) of core proteins, which is formed by the stepwise addition of monosaccharide residues by the respective specific glycosyltransferases. The protein is 2-phosphoxylose phosphatase 1 of Danio rerio (Zebrafish).